A 532-amino-acid polypeptide reads, in one-letter code: Arginine--tRNA ligase (532 aa).

The 'HIGH' region signature appears at 122–132 (ANPTGPLHVAS).

It belongs to the class-I aminoacyl-tRNA synthetase family. As to quaternary structure, monomer.

It localises to the cytoplasm. It carries out the reaction tRNA(Arg) + L-arginine + ATP = L-arginyl-tRNA(Arg) + AMP + diphosphate. The polypeptide is Arginine--tRNA ligase (Elusimicrobium minutum (strain Pei191)).